We begin with the raw amino-acid sequence, 542 residues long: Chaperonin GroEL 2 (542 aa).

ATP contacts are provided by residues 30 to 33 (TLGP), lysine 51, 87 to 91 (DGTTT), glycine 415, and aspartate 496.

It belongs to the chaperonin (HSP60) family. In terms of assembly, forms a cylinder of 14 subunits composed of two heptameric rings stacked back-to-back. Interacts with the co-chaperonin GroES.

Its subcellular location is the cytoplasm. The enzyme catalyses ATP + H2O + a folded polypeptide = ADP + phosphate + an unfolded polypeptide.. Functionally, together with its co-chaperonin GroES, plays an essential role in assisting protein folding. The GroEL-GroES system forms a nano-cage that allows encapsulation of the non-native substrate proteins and provides a physical environment optimized to promote and accelerate protein folding. The sequence is that of Chaperonin GroEL 2 from Rhizobium leguminosarum.